Here is a 322-residue protein sequence, read N- to C-terminus: DNA-directed RNA polymerase subunit alpha (322 aa).

An alpha N-terminal domain (alpha-NTD) region spans residues 1 to 229 (MNFVNNLFTL…KYFDLIFSFI (229 aa)). Residues 244 to 322 (NLNLKINSVY…NLNSKIEYDL (79 aa)) form an alpha C-terminal domain (alpha-CTD) region.

The protein belongs to the RNA polymerase alpha chain family. In terms of assembly, homodimer. The RNAP catalytic core consists of 2 alpha, 1 beta, 1 beta' and 1 omega subunit. When a sigma factor is associated with the core the holoenzyme is formed, which can initiate transcription.

It carries out the reaction RNA(n) + a ribonucleoside 5'-triphosphate = RNA(n+1) + diphosphate. Its function is as follows. DNA-dependent RNA polymerase catalyzes the transcription of DNA into RNA using the four ribonucleoside triphosphates as substrates. This Carsonella ruddii (strain PV) protein is DNA-directed RNA polymerase subunit alpha (rpoA).